The primary structure comprises 530 residues: Probable phosphoacetylglucosamine mutase (530 aa).

Ser-62 functions as the Phosphoserine intermediate in the catalytic mechanism. Mg(2+) contacts are provided by Ser-62, Asp-278, Asp-280, and Asp-282. Substrate-binding positions include 369-371 (EPN), 481-485 (RPSGT), and Arg-490.

Belongs to the phosphohexose mutase family. The cofactor is Mg(2+).

The enzyme catalyses N-acetyl-alpha-D-glucosamine 1-phosphate = N-acetyl-D-glucosamine 6-phosphate. It participates in nucleotide-sugar biosynthesis; UDP-N-acetyl-alpha-D-glucosamine biosynthesis; N-acetyl-alpha-D-glucosamine 1-phosphate from alpha-D-glucosamine 6-phosphate (route I): step 2/2. Catalyzes the conversion of GlcNAc-6-P into GlcNAc-1-P during the synthesis of uridine diphosphate/UDP-GlcNAc, which is a biosynthetic precursor of chitin and also supplies the amino sugars for N-linked oligosaccharides of glycoproteins. The polypeptide is Probable phosphoacetylglucosamine mutase (Encephalitozoon cuniculi (strain GB-M1) (Microsporidian parasite)).